A 117-amino-acid chain; its full sequence is Protein OPG035 (117 aa).

It belongs to the poxviridae OPG035 family.

In terms of biological role, bcl-2-like protein which contributes to virulence by preventing host NF-kappa-B activation in response to pro-inflammatory stimuli such as TNF-alpha or IL1B. This Bos taurus (Bovine) protein is Protein OPG035 (OPG035).